We begin with the raw amino-acid sequence, 120 residues long: Probable non-functional immunoglobulin kappa variable 2D-24 (120 aa).

Residues 1 to 19 form the signal peptide; the sequence is MRLLAQLLGLLMLWVPGSS. The Ig-like domain occupies 20–120; it reads GDIVMTQTPL…YYCTQATQFP (101 aa). The framework-1 stretch occupies residues 21–43; that stretch reads DIVMTQTPLSSPVTLGQPASISF. The segment at 44-59 is complementarity-determining-1; it reads RSSQSLVHSDGNTYLS. Residues 60–74 are framework-2; sequence WLQQRPGQPPRLLIY. The tract at residues 75–81 is complementarity-determining-2; the sequence is KVSNRFS. Residues 82–113 are framework-3; sequence GVPDRFSGSGAGTDFTLKISRVEAEDVGVYYC. Positions 114–120 are complementarity-determining-3; sequence TQATQFP.

Most probably, the immunoglobulin is not assembled due to incorrect folding of light chain. Immunoglobulins are composed of two identical heavy chains and two identical light chains; disulfide-linked.

It is found in the secreted. Its subcellular location is the cell membrane. Probable non-functional open reading frame (ORF) of V region of the variable domain of immunoglobulin light chains. Non-functional ORF generally cannot participate in the synthesis of a productive immunoglobulin chain due to altered V-(D)-J or switch recombination and/or splicing site (at mRNA level) and/or conserved amino acid change (protein level). Immunoglobulins, also known as antibodies, are membrane-bound or secreted glycoproteins produced by B lymphocytes. In the recognition phase of humoral immunity, the membrane-bound immunoglobulins serve as receptors which, upon binding of a specific antigen, trigger the clonal expansion and differentiation of B lymphocytes into immunoglobulins-secreting plasma cells. Secreted immunoglobulins mediate the effector phase of humoral immunity, which results in the elimination of bound antigens. The antigen binding site is formed by the variable domain of one heavy chain, together with that of its associated light chain. Thus, each immunoglobulin has two antigen binding sites with remarkable affinity for a particular antigen. The variable domains are assembled by a process called V-(D)-J rearrangement and can then be subjected to somatic hypermutations which, after exposure to antigen and selection, allow affinity maturation for a particular antigen. This chain is Probable non-functional immunoglobulin kappa variable 2D-24, found in Homo sapiens (Human).